The following is a 620-amino-acid chain: Methionine--tRNA ligase (620 aa).

A 'HIGH' region motif is present at residues 11–21 (PYANGPRHIGH). Zn(2+) contacts are provided by Cys-143, Cys-146, Cys-156, and Cys-159. Positions 347–351 (KFSSS) match the 'KMSKS' region motif. Residue Ser-350 coordinates ATP.

The protein belongs to the class-I aminoacyl-tRNA synthetase family. MetG type 1 subfamily. In terms of assembly, monomer. Zn(2+) is required as a cofactor.

The protein localises to the cytoplasm. The catalysed reaction is tRNA(Met) + L-methionine + ATP = L-methionyl-tRNA(Met) + AMP + diphosphate. Functionally, is required not only for elongation of protein synthesis but also for the initiation of all mRNA translation through initiator tRNA(fMet) aminoacylation. The chain is Methionine--tRNA ligase from Bifidobacterium adolescentis (strain ATCC 15703 / DSM 20083 / NCTC 11814 / E194a).